Reading from the N-terminus, the 134-residue chain is Large ribosomal subunit protein uL16c (134 aa).

The disordered stretch occupies residues 1–21; sequence MLSPKRTKYRKHHRGRMRGKA.

This sequence belongs to the universal ribosomal protein uL16 family. In terms of assembly, part of the 50S ribosomal subunit.

It localises to the plastid. Its subcellular location is the chloroplast. This Chlorella vulgaris (Green alga) protein is Large ribosomal subunit protein uL16c.